A 382-amino-acid chain; its full sequence is O-antigen polymerase (382 aa).

Residues 1 to 3 (MNN) are Cytoplasmic-facing. Residues 4–22 (INKIFITFLCIELIIGGGG) traverse the membrane as a helical segment. Topologically, residues 23–34 (RLLEPLGIFPLR) are periplasmic. A helical membrane pass occupies residues 35–54 (YLLFVFSFILLIFNLVTFNF). The Cytoplasmic segment spans residues 55–62 (SITQKCVS). The chain crosses the membrane as a helical span at residues 63–81 (LFIWLLLFPFYGFFVGLLA). Residues 82–94 (GNKINDILFDVQP) lie on the Periplasmic side of the membrane. Residues 95–112 (YLFMLSLIYLFTLRYTLK) form a helical membrane-spanning segment. Residues 113-125 (VFSCEIFIKIVNA) lie on the Cytoplasmic side of the membrane. A helical transmembrane segment spans residues 126–146 (FALYGSLLYISYIILLNFGLL). Residues 147-167 (NFNLIYEHLSLTSEFFFRPDG) lie on the Periplasmic side of the membrane. Residues 168 to 187 (AFFSKSFYFFGVGAIISFVD) form a helical membrane-spanning segment. Residues 188 to 189 (KK) are Cytoplasmic-facing. The chain crosses the membrane as a helical span at residues 190–206 (YLKCLIIVLAILLTESR). Over 207–208 (GV) the chain is Periplasmic. Residues 209 to 226 (LLFTTLSLLLASFKLHKL) form a helical membrane-spanning segment. Topologically, residues 227-229 (YLN) are cytoplasmic. A helical transmembrane segment spans residues 230–247 (TIIIILGSVLFIIMLYMV). Residues 248–300 (GSRSEDSDSVRFNDLYFYYKNVDLATFLFGRGFGSFILDRLRIEIVPLEILQK) lie on the Periplasmic side of the membrane. A helical membrane pass occupies residues 301–318 (TGVIGVFISLVPMLLIFL). Over 319 to 329 (KGYFLNSTKTS) the chain is Cytoplasmic. A helical membrane pass occupies residues 330–349 (LMMSLILFFSITVSITNPFL). The Periplasmic portion of the chain corresponds to 350-352 (FTP). The helical transmembrane segment at 353 to 370 (MGIFIIGVVVLWVFSIEN) threads the bilayer. At 371 to 382 (IQISNNLTSGAK) the chain is on the cytoplasmic side.

The protein resides in the cell inner membrane. The catalysed reaction is n lipid-linked O-antigen repeat units = a lipid-linked O antigen + (n-1) polyisoprenyl diphosphate.. Its pathway is bacterial outer membrane biogenesis; LPS O-antigen biosynthesis. In terms of biological role, polymerase involved in the biosynthesis of the lipopolysaccharide (LPS). Catalyzes the polymerization of the O-antigen repeat units on the periplasmic face of the inner membrane, leading to the formation of the lipid-linked O-antigen molecule. This Shigella flexneri protein is O-antigen polymerase.